The following is a 572-amino-acid chain: Far upstream element-binding protein 3 (572 aa).

The residue at position 2 (Ala2) is an N-acetylalanine. Glycyl lysine isopeptide (Lys-Gly) (interchain with G-Cter in SUMO2) cross-links involve residues Lys15 and Lys57. A Phosphothreonine modification is found at Thr76. KH domains follow at residues 77 to 141 (VITE…KRLL), 162 to 228 (STIQ…REMV), 253 to 317 (GGSI…AHII), and 354 to 421 (VQEI…RQLI). Ser296 carries the phosphoserine modification. Residues 426–521 (GGTNLGAPGA…SQPNYSKAWE (96 aa)) are disordered. The span at 496–514 (QQPTQQVPSQQSQPQSSQP) shows a compositional bias: low complexity. Phosphoserine is present on residues Ser539 and Ser569.

As to expression, detected in a number of cell lines.

It localises to the nucleus. May interact with single-stranded DNA from the far-upstream element (FUSE). May activate gene expression. The sequence is that of Far upstream element-binding protein 3 (FUBP3) from Homo sapiens (Human).